Consider the following 185-residue polypeptide: MAETAYTPRLRTEYDRKIKSALTEKFGYANVMQVPRLDKVVLNMGIGEAVNDRKKAETAAADLSLIAGQKAVVTYSRVAIATFKLRENQPIGCKVTLRKAKMYEFIDRLINVALPRVRDFRGLNPKSFDGRGNYSLGIKEHIIFPEIDFDKAGESWGMDITVCTTAATDDEARALLTAFNFPFRQ.

Belongs to the universal ribosomal protein uL5 family. As to quaternary structure, part of the 50S ribosomal subunit; part of the 5S rRNA/L5/L18/L25 subcomplex. Contacts the 5S rRNA and the P site tRNA. Forms a bridge to the 30S subunit in the 70S ribosome.

This is one of the proteins that bind and probably mediate the attachment of the 5S RNA into the large ribosomal subunit, where it forms part of the central protuberance. In the 70S ribosome it contacts protein S13 of the 30S subunit (bridge B1b), connecting the 2 subunits; this bridge is implicated in subunit movement. Contacts the P site tRNA; the 5S rRNA and some of its associated proteins might help stabilize positioning of ribosome-bound tRNAs. The protein is Large ribosomal subunit protein uL5 of Bradyrhizobium sp. (strain BTAi1 / ATCC BAA-1182).